The primary structure comprises 126 residues: Holo-[acyl-carrier-protein] synthase (126 aa).

Positions 9 and 58 each coordinate Mg(2+).

The protein belongs to the P-Pant transferase superfamily. AcpS family. Mg(2+) is required as a cofactor.

It localises to the cytoplasm. The enzyme catalyses apo-[ACP] + CoA = holo-[ACP] + adenosine 3',5'-bisphosphate + H(+). Its function is as follows. Transfers the 4'-phosphopantetheine moiety from coenzyme A to a Ser of acyl-carrier-protein. The sequence is that of Holo-[acyl-carrier-protein] synthase from Vibrio parahaemolyticus serotype O3:K6 (strain RIMD 2210633).